The following is a 381-amino-acid chain: cAMP-dependent protein kinase type I-alpha regulatory subunit (381 aa).

Methionine 1 is modified (N-acetylmethionine). Residues 1–135 (MESGSTAASE…AALAKAIEKN (135 aa)) form a dimerization and phosphorylation region. Serine 3 carries the phosphoserine modification. Residues 64–96 (QIQNLQKAGTRTDSREDEISPPPPNPVVKGRRR) form a disordered region. Position 75 is a phosphothreonine (threonine 75). Residues serine 77 and serine 83 each carry the phosphoserine modification. The Pseudophosphorylation motif motif lies at 96–100 (RRGAI). Serine 101 bears the Phosphoserine mark. Residues 137–254 (LFSH…SKVS), glutamate 202, arginine 211, 255–381 (ILES…SLSV), glutamate 326, and arginine 335 each bind 3',5'-cyclic AMP. Residue serine 258 is modified to Phosphoserine.

Belongs to the cAMP-dependent kinase regulatory chain family. The inactive holoenzyme is composed of two regulatory chains and two catalytic chains. Activation by cAMP releases the two active catalytic monomers and the regulatory dimer. Interacts with PRKACA and PRKACB. PRKAR1A also interacts with RFC2; the complex may be involved in cell survival. Interacts with AKAP4. Interacts with RARA; the interaction occurs in the presence of cAMP or FSH and regulates RARA transcriptional activity. Interacts with the phosphorylated form of PJA2. Interacts with CBFA2T3. Interacts with PRKX; regulates this cAMP-dependent protein kinase. Interacts with smAKAP; this interaction may target PRKAR1A to the plasma membrane. Interacts with AICDA. Post-translationally, the pseudophosphorylation site binds to the substrate-binding region of the catalytic chain, resulting in the inhibition of its activity.

It is found in the cell membrane. Its function is as follows. Regulatory subunit of the cAMP-dependent protein kinases involved in cAMP signaling in cells. The sequence is that of cAMP-dependent protein kinase type I-alpha regulatory subunit (PRKAR1A) from Pongo abelii (Sumatran orangutan).